The chain runs to 430 residues: Asparagine--tRNA ligase (430 aa).

It belongs to the class-II aminoacyl-tRNA synthetase family. In terms of assembly, homodimer.

The protein localises to the cytoplasm. The catalysed reaction is tRNA(Asn) + L-asparagine + ATP = L-asparaginyl-tRNA(Asn) + AMP + diphosphate + H(+). In Staphylococcus haemolyticus (strain JCSC1435), this protein is Asparagine--tRNA ligase.